Reading from the N-terminus, the 1888-residue chain is Nuclear pore membrane glycoprotein 210-like (1888 aa).

The signal sequence occupies residues Met1–Leu35. N-linked (GlcNAc...) asparagine glycosylation is found at Asn84, Asn304, Asn348, Asn495, Asn522, Asn812, and Asn931. A BIG2 domain is found at Phe1082–Gly1154. An N-linked (GlcNAc...) asparagine glycan is attached at Asn1445. Residues Ile1813–Asn1833 form a helical membrane-spanning segment. N-linked (GlcNAc...) asparagine glycosylation is present at Asn1859.

The protein belongs to the NUP210 family.

The protein localises to the nucleus membrane. The polypeptide is Nuclear pore membrane glycoprotein 210-like (NUP210L) (Homo sapiens (Human)).